We begin with the raw amino-acid sequence, 159 residues long: MRIGHGFDVHAFGGEGPIIIGGVRISYEKGLLAHSDGDVALHALTDALLGAAALGDIGKLFPDTDPAFKGADSRELLREAWRRIQAKGYTLGNVDVTIIAQAPKMLPHIPQMRVFIAEDLGCHMDDVNVKATTTEKLGFTGRGEGIACEAVALLMKAAK.

Residues D8 and H10 each contribute to the a divalent metal cation site. Residues 8 to 10 (DVH) and 34 to 35 (HS) each bind 4-CDP-2-C-methyl-D-erythritol 2-phosphate. An a divalent metal cation-binding site is contributed by H42. 4-CDP-2-C-methyl-D-erythritol 2-phosphate contacts are provided by residues 56–58 (DIG), 61–65 (FPDTD), 100–106 (AQAPKML), 132–135 (TTTE), F139, and R142.

Belongs to the IspF family. In terms of assembly, homotrimer. A divalent metal cation is required as a cofactor.

The enzyme catalyses 4-CDP-2-C-methyl-D-erythritol 2-phosphate = 2-C-methyl-D-erythritol 2,4-cyclic diphosphate + CMP. It participates in isoprenoid biosynthesis; isopentenyl diphosphate biosynthesis via DXP pathway; isopentenyl diphosphate from 1-deoxy-D-xylulose 5-phosphate: step 4/6. Functionally, involved in the biosynthesis of isopentenyl diphosphate (IPP) and dimethylallyl diphosphate (DMAPP), two major building blocks of isoprenoid compounds. Catalyzes the conversion of 4-diphosphocytidyl-2-C-methyl-D-erythritol 2-phosphate (CDP-ME2P) to 2-C-methyl-D-erythritol 2,4-cyclodiphosphate (ME-CPP) with a corresponding release of cytidine 5-monophosphate (CMP). The protein is 2-C-methyl-D-erythritol 2,4-cyclodiphosphate synthase of Salmonella dublin (strain CT_02021853).